We begin with the raw amino-acid sequence, 380 residues long: Carbonic anhydrase 2 (380 aa).

An N-terminal signal peptide occupies residues 1 to 20; that stretch reads MARTGALLLAALALAGCAQA. In terms of domain architecture, Alpha-carbonic anhydrase spans 38-322; it reads DHWDHSLNGE…HHHRRLLHNH (285 aa). Intrachain disulfides connect C61–C264, C194–C198, and C296–C354. Residue N101 is glycosylated (N-linked (GlcNAc...) asparagine). H112 acts as the Proton acceptor in catalysis. N135 is a glycosylation site (N-linked (GlcNAc...) asparagine). 3 residues coordinate Zn(2+): H163, H165, and H182. Residue 260–261 participates in substrate binding; sequence TT. An N-linked (GlcNAc...) asparagine glycan is attached at N297.

It belongs to the alpha-carbonic anhydrase family. Tetramer of two large and two small subunits linked by two disulfide bonds. Zn(2+) serves as cofactor.

It is found in the periplasm. It carries out the reaction hydrogencarbonate + H(+) = CO2 + H2O. Functionally, reversible hydration of carbon dioxide. The polypeptide is Carbonic anhydrase 2 (CAH2) (Chlamydomonas reinhardtii (Chlamydomonas smithii)).